The primary structure comprises 162 residues: Mitochondrial intermembrane space import and assembly protein 40 homolog (162 aa).

Residues 1-61 (MGQAQSDENS…DNENESLEAK (61 aa)) are disordered. Residues 9-18 (NSIPTTTTTN) are compositionally biased toward low complexity. 3 disulfide bridges follow: Cys68–Cys70, Cys79–Cys112, and Cys89–Cys102. In terms of domain architecture, CHCH spans 76 to 120 (NGSCGSQFSEAFLCFLKSTAEEKGSDCVNPFVALQSCINANPDAF). 2 consecutive short sequence motifs (cx9C motif) follow at residues 79–89 (CGSQFSEAFLC) and 102–112 (CVNPFVALQSC). The segment at 119-162 (AFSKSVTGDEKETEKKEEQPPVQDHRIIPPLWAKDPPRSGNSKL) is disordered. Over residues 125-145 (TGDEKETEKKEEQPPVQDHRI) the composition is skewed to basic and acidic residues.

Its subcellular location is the mitochondrion intermembrane space. The protein localises to the peroxisome matrix. In terms of biological role, required for the import and folding of small cysteine-containing proteins in the mitochondrial intermembrane space. Involved in the mitochondrial oxidative folding of the copper-zinc superoxide dismutase CSD1, the copper chaperone for superoxide dismutase CCS, and subunits of the mitochondrial membrane respiratory chain NADH dehydrogenase (Complex I). Involved in the peroxisomal oxidative folding of the copper-zinc superoxide dismutase CSD3, and the fatty acid beta-oxidation multifunctional protein AIM1. The polypeptide is Mitochondrial intermembrane space import and assembly protein 40 homolog (Arabidopsis thaliana (Mouse-ear cress)).